A 418-amino-acid chain; its full sequence is Diacylglycerol O-acyltransferase 1 (418 aa).

Residues 1 to 30 are disordered; it reads MSGTFNDIRRRKKEEGSPTAGITERHENKS. The Cytoplasmic segment spans residues 1-71; the sequence is MSGTFNDIRR…LAVAWHTSSF (71 aa). At Ser-17 the chain carries Phosphoserine. Residues 72-92 traverse the membrane as a helical segment; that stretch reads VLFSIFTLFAISTPALWVLAI. Residues 93–186 are Lumenal-facing; that stretch reads PYMIYFFFDR…DYRNQECTGP (94 aa). N-linked (GlcNAc...) asparagine glycosylation occurs at Asn-173. Residues 187–207 traverse the membrane as a helical segment; it reads TYLFGYHPHGIGALGAFGAFA. Over 208–215 the chain is Cytoplasmic; that stretch reads TEGCNYSK. The chain crosses the membrane as a helical span at residues 216–236; sequence IFPGIPISLMTLVTQFHIPLY. Over 237 to 289 the chain is Lumenal; the sequence is RDYLLALGISSVSRKNALRTLSKNQSICIVVGGARESLLSSTNGTQLILNKRK. Residues Asn-260 and Asn-279 are each glycosylated (N-linked (GlcNAc...) asparagine). Residues 290-310 form a helical membrane-spanning segment; sequence GFIKLAIQTGNINLVPVFAFG. The Cytoplasmic portion of the chain corresponds to 311–418; the sequence is EVDCYNVLST…VPDAELKIVG (108 aa).

This sequence belongs to the diacylglycerol acyltransferase family.

It is found in the lipid droplet. The protein resides in the endoplasmic reticulum membrane. The enzyme catalyses an acyl-CoA + a 1,2-diacyl-sn-glycerol = a triacyl-sn-glycerol + CoA. It catalyses the reaction a 2-acylglycerol + an acyl-CoA = a 1,2-diacylglycerol + CoA. The catalysed reaction is 2-(9Z-octadecenoyl)-glycerol + (9Z)-octadecenoyl-CoA = 1,2-di-(9Z-octadecenoyl)-glycerol + CoA. It participates in glycerolipid metabolism; triacylglycerol biosynthesis. Catalyzes the terminal and only committed step in triacylglycerol (TAG) synthesis by using diacylglycerol (DAG) and fatty acyl-CoA as substrates. Required for storage lipid synthesis. Major DAG esterifying enzyme in stationary phase when TAG production is particularly active. Involved in lipid particle synthesis from the endoplasmic reticulum, promoting localized TAG production at discrete ER subdomains, and in ergosterol biosynthesis. Also has monoacylglycerol acyltransferase (MGAT) activity, catalyzing the acyl-CoA-dependent esterification of monoacylglycerol to diacylglycerol. Can also utilize ceramide instead of DAG, acylating the ceramides by attaching a fatty acid to the hydroxy group on the first carbon atom of the long-chain base to produce 1-O-acylceramides. The sequence is that of Diacylglycerol O-acyltransferase 1 (DGA1) from Saccharomyces cerevisiae (strain ATCC 204508 / S288c) (Baker's yeast).